Here is a 274-residue protein sequence, read N- to C-terminus: Capsid protein (274 aa).

Residues R88–R113 form a disordered region. Over residues Q102–R113 the composition is skewed to basic and acidic residues.

Its subcellular location is the virion. Its function is as follows. Capsid protein self-assembles to form a capsid about 33 nm in diameter. The capsid encapsulates two genomic RNAs as well as a third, subgenomic RNA (RNA3) (Potential). In Raspberry bushy dwarf virus (isolate Malling Jewel raspberry/R15) (RBDV), this protein is Capsid protein.